Consider the following 424-residue polypeptide: CinA-like protein (424 aa).

This sequence belongs to the CinA family.

The protein is CinA-like protein of Shewanella frigidimarina (strain NCIMB 400).